Reading from the N-terminus, the 388-residue chain is Putative O-antigen polymerase (388 aa).

Transmembrane regions (helical) follow at residues 23-43 (IFYPAVCVNIIFALVLLGYEI), 57-77 (LIFLLCNVLTFTLSCLLTESV), 97-117 (VHNVGLLVISFSMIYICMRLS), 143-163 (NFSAYMQPIILTTFALFIWSK), 180-200 (IVFIFAIILNTGKQIVFMVII), 215-235 (VYLITAVGVLFSLYMLFLRGL), 312-332 (ISAELSYLMMVIHGCISGVLW), 338-358 (YISVKIFYSYFIYTFSFIFYH), and 361-381 (FMTNISSWIQITLCIIVFSQF).

The protein resides in the cell inner membrane. May function in vitro as a polymerase that catalyzes the polymerization of the O-antigen repeat units on the periplasmic face of the inner membrane, leading to the formation of the lipid-linked O-antigen molecule. However, E.coli K12 strains do not normally produce the O-antigen in vivo due to mutations in the rfb gene cluster. K12 strains are phenotypically rough, their lipopolysaccharide having a complete core structure, but no O-antigen. In Escherichia coli (strain K12), this protein is Putative O-antigen polymerase.